We begin with the raw amino-acid sequence, 310 residues long: uncharacterized protein (310 aa).

This is an uncharacterized protein from Archaeoglobus fulgidus (strain ATCC 49558 / DSM 4304 / JCM 9628 / NBRC 100126 / VC-16).